The primary structure comprises 125 residues: Oxytocin-neurophysin 1 (125 aa).

The N-terminal stretch at 1–19 is a signal peptide; sequence MAGPSLACCLLGLLALTSA. Cys-20 and Cys-25 are joined by a disulfide. Gly-28 carries the post-translational modification Glycine amide. 7 disulfide bridges follow: Cys-41–Cys-85, Cys-44–Cys-58, Cys-52–Cys-75, Cys-59–Cys-65, Cys-92–Cys-104, Cys-98–Cys-116, and Cys-105–Cys-110.

Belongs to the vasopressin/oxytocin family. As to quaternary structure, interacts with oxytocin receptor (Ki=1.5 nM). Interacts with vasopressin V1aR/AVPR1A (Ki=37 nM), V1bR/AVPR1B (Ki=222 nM) and V2R/AVPR2 receptors (Ki=823 nM).

The protein localises to the secreted. Functionally, neurophysin 1 specifically binds oxytocin. Oxytocin causes contraction of the smooth muscle of the uterus and of the mammary gland. Acts by binding to oxytocin receptor (OXTR). This is Oxytocin-neurophysin 1 (OXT) from Homo sapiens (Human).